The chain runs to 96 residues: Co-chaperonin GroES (96 aa).

Belongs to the GroES chaperonin family. In terms of assembly, heptamer of 7 subunits arranged in a ring. Interacts with the chaperonin GroEL.

The protein localises to the cytoplasm. In terms of biological role, together with the chaperonin GroEL, plays an essential role in assisting protein folding. The GroEL-GroES system forms a nano-cage that allows encapsulation of the non-native substrate proteins and provides a physical environment optimized to promote and accelerate protein folding. GroES binds to the apical surface of the GroEL ring, thereby capping the opening of the GroEL channel. The chain is Co-chaperonin GroES from Shewanella baltica (strain OS223).